We begin with the raw amino-acid sequence, 108 residues long: uncharacterized protein (108 aa).

This is an uncharacterized protein from Bacillus subtilis (strain 168).